The following is a 152-amino-acid chain: Transcriptional regulator MraZ (152 aa).

SpoVT-AbrB domains lie at 5-52 and 81-124; these read ATLV…PLPE and ASEC…DETT.

It belongs to the MraZ family. In terms of assembly, forms oligomers.

It is found in the cytoplasm. The protein resides in the nucleoid. Its function is as follows. Negatively regulates its own expression and that of the subsequent genes in the proximal part of the division and cell wall (dcw) gene cluster. Acts by binding directly to DNA. May also regulate the expression of genes outside the dcw cluster. This Citrobacter koseri (strain ATCC BAA-895 / CDC 4225-83 / SGSC4696) protein is Transcriptional regulator MraZ.